A 1829-amino-acid polypeptide reads, in one-letter code: Sodium channel protein type 4 subunit alpha A (1829 aa).

Residues 1–124 (MARLLPPTGT…RGAIKILIHS (124 aa)) lie on the Cytoplasmic side of the membrane. The segment at 32-52 (STREELEGAEEEPQAPSSDLE) is disordered. One copy of the I repeat lies at 106-421 (CISPFSIVRR…VVAMAYDEQN (316 aa)). Residues 125 to 143 (LFSMFIMITILSNCVFMTM) traverse the membrane as a helical segment. Residues 144-150 (SNPPAWS) lie on the Extracellular side of the membrane. The helical transmembrane segment at 151 to 171 (KTVEYVFTGIYTFEATVKVLS) threads the bilayer. The Cytoplasmic portion of the chain corresponds to 172-185 (RGFCIGPFTFLRDP). A helical membrane pass occupies residues 186–203 (WNWLDFMVISMAYVTEFV). Residues 204 to 209 (DLGNVS) are Extracellular-facing. N-linked (GlcNAc...) asparagine glycosylation occurs at asparagine 207. The chain crosses the membrane as a helical span at residues 210–226 (ALRTFRVLRALKTITVI). Over 227–245 (PGLKTIVGALIQSVKKMID) the chain is Cytoplasmic. The chain crosses the membrane as a helical span at residues 246 to 265 (VMILTIFALAVFALIGLQLF). Residues 266–358 (MGNLRQKCIR…PNYGYTSYDN (93 aa)) lie on the Extracellular side of the membrane. Cysteine 273 and cysteine 327 are oxidised to a cystine. Residues asparagine 280, asparagine 293, and asparagine 329 are each glycosylated (N-linked (GlcNAc...) asparagine). The cysteines at positions 336 and 342 are disulfide-linked. Residues 359–383 (FGWAFLALFRLMTQDFWENLFQLTL) constitute an intramembrane region (pore-forming). The Extracellular segment spans residues 384–390 (RAAGKTY). A helical transmembrane segment spans residues 391–411 (MIFFVVVIFLGSFYLINLILA). At 412–582 (VVAMAYDEQN…KWVHFVVMDP (171 aa)) the chain is on the cytoplasmic side. Positions 446–467 (ETGSKASLASQKTQSRGSNRTG) are enriched in polar residues. The segment at 446–468 (ETGSKASLASQKTQSRGSNRTGS) is disordered. The stretch at 564–836 (CCAPWILFKK…QIAIGRITRG (273 aa)) is one II repeat. A helical transmembrane segment spans residues 583–601 (FVDLGITICIVLNTLFMAM). The Extracellular segment spans residues 602 to 612 (EHYPMSPHFEH). Residues 613–632 (VLSVGNLVFTGIFTAEMVFK) form a helical membrane-spanning segment. The Cytoplasmic segment spans residues 633–646 (LIAMDPYYYFQVGW). A helical transmembrane segment spans residues 647-666 (NIFDSIIVTLSLVELGLANV). The Extracellular portion of the chain corresponds to 667-668 (QG). The helical transmembrane segment at 669 to 686 (LSVLRSFRLLRVFKLAKS) threads the bilayer. Residues 687–702 (WPTLNMLIKIIGNSVG) are Cytoplasmic-facing. A helical membrane pass occupies residues 703-721 (ALGNLTLVLAIIVFIFAVV). The Extracellular segment spans residues 722–750 (GMQLFGKSYKDCVCKISEDCELPRWHMND). A disulfide bridge connects residues cysteine 735 and cysteine 741. The segment at residues 751 to 771 (FFHSFLIVFRILCGEWIETMW) is an intramembrane region (pore-forming). The Extracellular portion of the chain corresponds to 772–782 (DCMEVAGASMC). Cysteine 773 and cysteine 782 are oxidised to a cystine. Residues 783 to 801 (LIVFMMVMVIGNLVVLNLF) form a helical membrane-spanning segment. At 802-998 (LALLLSSFSG…TCFTIVEHDY (197 aa)) the chain is on the cytoplasmic side. Residues 901–957 (SDVEEDEDSESSDEEDAKATLNDGDSSVCSTVDYQPPEPEPEPEEVEEEEPEPEEPE) form a disordered region. Over residues 902–916 (DVEEDEDSESSDEED) the composition is skewed to acidic residues. Residues 923–933 (DGDSSVCSTVD) show a composition bias toward polar residues. The span at 939–957 (PEPEPEEVEEEEPEPEEPE) shows a compositional bias: acidic residues. The stretch at 979 to 1292 (WGKKWWNLRR…KKYYNAMKKL (314 aa)) is one III repeat. Residues 999–1016 (FETFIIFMILLSSGALAF) traverse the membrane as a helical segment. The Extracellular portion of the chain corresponds to 1017–1029 (EDINIERRRVIKT). A helical membrane pass occupies residues 1030-1048 (ILEYADKVFTYIFIVEMLL). Over 1049–1062 (KWVAYGFKTYFTNA) the chain is Cytoplasmic. Residues 1063–1081 (WCWLDFLIVDVSLVSLTAN) traverse the membrane as a helical segment. The Extracellular portion of the chain corresponds to 1082-1089 (LMGYSELG). Residues 1090–1108 (AIKSLRTLRALRPLRALSR) traverse the membrane as a helical segment. Topologically, residues 1109-1125 (FEGMRVVVNALVGAIPS) are cytoplasmic. The chain crosses the membrane as a helical span at residues 1126 to 1145 (IFNVLLVCLIFWLIFSIMGV). The Extracellular portion of the chain corresponds to 1146-1196 (NLFAGKFYHCINTTTEERIPMDVVNNKSDCMALMYTNEVRWVNVKVNYDNV). A disulfide bridge links cysteine 1155 with cysteine 1175. 2 N-linked (GlcNAc...) asparagine glycosylation sites follow: asparagine 1157 and asparagine 1171. The segment at residues 1197–1218 (GLGYLSLLQIATFKGWMDIMYA) is an intramembrane region (pore-forming). Residues 1219–1235 (AVDSREVDEQPSYEINL) lie on the Extracellular side of the membrane. Residues 1236 to 1257 (YMYLYFVIFIIFGSFFTLNLFI) traverse the membrane as a helical segment. The Cytoplasmic portion of the chain corresponds to 1258–1320 (GVIIDNFNQQ…LVFDFISKQF (63 aa)). The tract at residues 1276 to 1278 (IFM) is important for rapid channel inactivation. One copy of the IV repeat lies at 1301–1599 (IPRPSNIIQG…WEKFDVDATQ (299 aa)). Residues 1321–1338 (FDIFIMVLICLNMVTMMI) traverse the membrane as a helical segment. Topologically, residues 1339–1349 (ETDDQSAEKEY) are extracellular. A helical transmembrane segment spans residues 1350–1368 (VLYQINLVFIVVFTSECVL). Residues 1369–1380 (KLFALRQYFFTI) are Cytoplasmic-facing. The helical transmembrane segment at 1381-1398 (GWNVFDFVVVILSIAGLM) threads the bilayer. Residues 1399–1411 (LSDIIEKYFVSPT) are Extracellular-facing. Residues 1412 to 1428 (LFRVIRLARIGRVLRLI) traverse the membrane as a helical segment. Residues 1429–1447 (RGAKGIRTLLFALMMSLPA) lie on the Cytoplasmic side of the membrane. The chain crosses the membrane as a helical span at residues 1448-1465 (LFNIGLLLFLIMFIFSIF). Over 1466-1487 (GMSNFAYVKKQAGIDDIFNFET) the chain is Extracellular. The segment at residues 1488 to 1510 (FGGSIICLFEITTSAGWDGLLLP) is an intramembrane region (pore-forming). Residues 1511–1540 (ILNSGPPDCDPDFENPGTDVRGNCGNPGMG) lie on the Extracellular side of the membrane. Cysteines 1519 and 1534 form a disulfide. The chain crosses the membrane as a helical span at residues 1541-1563 (IMFFCSYIIMSFLVVVNMYIAII). Over 1564–1829 (LENFNNAQEE…NATTIKESIV (266 aa)) the chain is Cytoplasmic. The 30-residue stretch at 1693-1722 (EERAAIAVQRIYRRHLLKRAIRYACFMRRS) folds into the IQ domain. The interval 1765–1786 (PMRPNSQPPKPSQVTQTRASVT) is disordered.

The protein belongs to the sodium channel (TC 1.A.1.10) family. Nav1.4/SCN4A subfamily. In terms of assembly, voltage-gated sodium (Nav) channels consist of an ion-conducting alpha subunit which is functional on its own associated with regulatory beta subunits. Expressed in skeletal muscle, brain, spinal cord, and eye.

Its subcellular location is the cell membrane. The catalysed reaction is Na(+)(in) = Na(+)(out). Functionally, pore-forming subunit of a voltage-gated sodium (Nav) channel that directly mediates the depolarizing phase of action potentials in excitable membranes. Navs, also called VGSCs (voltage-gated sodium channels) or VDSCs (voltage-dependent sodium channels), operate by switching between closed and open conformations depending on the voltage difference across the membrane. In the open conformation they allow Na(+) ions to selectively pass through the pore, along their electrochemical gradient. The influx of Na+ ions provokes membrane depolarization, initiating the propagation of electrical signals throughout cells and tissues. This chain is Sodium channel protein type 4 subunit alpha A (scn4aa), found in Danio rerio (Zebrafish).